The chain runs to 208 residues: Small ribosomal subunit protein uS4 (208 aa).

The 67-residue stretch at 98–164 (SRLDNVVYRM…DRIKFALELA (67 aa)) folds into the S4 RNA-binding domain.

This sequence belongs to the universal ribosomal protein uS4 family. Part of the 30S ribosomal subunit. Contacts protein S5. The interaction surface between S4 and S5 is involved in control of translational fidelity.

In terms of biological role, one of the primary rRNA binding proteins, it binds directly to 16S rRNA where it nucleates assembly of the body of the 30S subunit. Functionally, with S5 and S12 plays an important role in translational accuracy. The protein is Small ribosomal subunit protein uS4 of Nitrosococcus oceani (strain ATCC 19707 / BCRC 17464 / JCM 30415 / NCIMB 11848 / C-107).